Consider the following 308-residue polypeptide: Ornithine carbamoyltransferase (308 aa).

Carbamoyl phosphate contacts are provided by residues Ser-56–Thr-59, Gln-83, Arg-107, and His-134–Gln-137. Residues Asn-165, Asp-225, and Ser-229–Met-230 contribute to the L-ornithine site. Carbamoyl phosphate-binding positions include Cys-266–Leu-267 and Arg-294.

It belongs to the aspartate/ornithine carbamoyltransferase superfamily. OTCase family.

The protein localises to the cytoplasm. It carries out the reaction carbamoyl phosphate + L-ornithine = L-citrulline + phosphate + H(+). It functions in the pathway amino-acid biosynthesis; L-arginine biosynthesis; L-arginine from L-ornithine and carbamoyl phosphate: step 1/3. Its function is as follows. Reversibly catalyzes the transfer of the carbamoyl group from carbamoyl phosphate (CP) to the N(epsilon) atom of ornithine (ORN) to produce L-citrulline. This is Ornithine carbamoyltransferase from Paracoccus denitrificans (strain Pd 1222).